A 152-amino-acid chain; its full sequence is MGLSTLEQKLTEMITAPVEALGYELVGIEFIRGRTSTLRIYIDSEDGINVDDCADVSHQVSAVLDVEDPITVAYNLEVSSPGLDRPMFTAEHYARFLGEEVTLVLRMAVQNRRKWQGVIKAVDGEMITVTVEGKDEVFALSNIQKANLVPHF.

This sequence belongs to the RimP family.

It is found in the cytoplasm. In terms of biological role, required for maturation of 30S ribosomal subunits. The sequence is that of Ribosome maturation factor RimP from Citrobacter koseri (strain ATCC BAA-895 / CDC 4225-83 / SGSC4696).